The chain runs to 351 residues: DNA polymerase IV (351 aa).

The region spanning Ile4–Gly185 is the UmuC domain. Residues Asp8 and Asp103 each coordinate Mg(2+). Glu104 is a catalytic residue.

The protein belongs to the DNA polymerase type-Y family. In terms of assembly, monomer. It depends on Mg(2+) as a cofactor.

Its subcellular location is the cytoplasm. The catalysed reaction is DNA(n) + a 2'-deoxyribonucleoside 5'-triphosphate = DNA(n+1) + diphosphate. Its function is as follows. Poorly processive, error-prone DNA polymerase involved in untargeted mutagenesis. Copies undamaged DNA at stalled replication forks, which arise in vivo from mismatched or misaligned primer ends. These misaligned primers can be extended by PolIV. Exhibits no 3'-5' exonuclease (proofreading) activity. May be involved in translesional synthesis, in conjunction with the beta clamp from PolIII. The polypeptide is DNA polymerase IV (Escherichia coli O9:H4 (strain HS)).